Here is a 422-residue protein sequence, read N- to C-terminus: Enolase (422 aa).

Gln161 lines the (2R)-2-phosphoglycerate pocket. Residue Glu203 is the Proton donor of the active site. Positions 240, 283, and 310 each coordinate Mg(2+). (2R)-2-phosphoglycerate is bound by residues Lys335, Arg364, Ser365, and Lys386. Lys335 functions as the Proton acceptor in the catalytic mechanism.

The protein belongs to the enolase family. Mg(2+) is required as a cofactor.

Its subcellular location is the cytoplasm. It is found in the secreted. The protein localises to the cell surface. It carries out the reaction (2R)-2-phosphoglycerate = phosphoenolpyruvate + H2O. It functions in the pathway carbohydrate degradation; glycolysis; pyruvate from D-glyceraldehyde 3-phosphate: step 4/5. Catalyzes the reversible conversion of 2-phosphoglycerate (2-PG) into phosphoenolpyruvate (PEP). It is essential for the degradation of carbohydrates via glycolysis. This is Enolase from Deinococcus deserti (strain DSM 17065 / CIP 109153 / LMG 22923 / VCD115).